Reading from the N-terminus, the 344-residue chain is F-box protein HRT3 (344 aa).

A TPR repeat occupies 14–47; the sequence is AIAIWEKGVLKEKDGSMSDAINFYRSALKIHDNV. The region spanning 98 to 148 is the F-box domain; sequence WILEILPDDILLRIIKKVILMSGESWVNLSMTCSTFSKLCFHDSVPFKTFA.

Interacts with SKP1. Component of the probable SCF(HRT3) complex containing CDC53, SKP1, RBX1 and HRT3.

Its pathway is protein modification; protein ubiquitination. Its function is as follows. Substrate recognition component of a SCF (SKP1-CUL1-F-box protein) E3 ubiquitin-protein ligase complex which mediates the ubiquitination and subsequent proteasomal degradation of target proteins. Probably recognizes and binds to phosphorylated target proteins. The polypeptide is F-box protein HRT3 (HRT3) (Saccharomyces cerevisiae (strain ATCC 204508 / S288c) (Baker's yeast)).